Consider the following 92-residue polypeptide: DNA-directed RNA polymerase subunit omega (92 aa).

The protein belongs to the RNA polymerase subunit omega family. In terms of assembly, the RNAP catalytic core consists of 2 alpha, 1 beta, 1 beta' and 1 omega subunit. When a sigma factor is associated with the core the holoenzyme is formed, which can initiate transcription.

The enzyme catalyses RNA(n) + a ribonucleoside 5'-triphosphate = RNA(n+1) + diphosphate. Promotes RNA polymerase assembly. Latches the N- and C-terminal regions of the beta' subunit thereby facilitating its interaction with the beta and alpha subunits. The chain is DNA-directed RNA polymerase subunit omega from Shewanella oneidensis (strain ATCC 700550 / JCM 31522 / CIP 106686 / LMG 19005 / NCIMB 14063 / MR-1).